Consider the following 279-residue polypeptide: Large ribosomal subunit protein uL2 (279 aa).

2 disordered regions span residues 29 to 59 and 224 to 279; these read PEKSLLRPLHKTGGRNNSGKITTRHKGGGHK and VAMN…KNKR. Positions 50 to 59 are enriched in basic residues; the sequence is TTRHKGGGHK. Positions 253-268 are enriched in basic and acidic residues; it reads PEGRTRRPNKESDKLI. Over residues 269-279 the composition is skewed to basic residues; sequence VRRRRTGKNKR.

Belongs to the universal ribosomal protein uL2 family. In terms of assembly, part of the 50S ribosomal subunit. Forms a bridge to the 30S subunit in the 70S ribosome.

One of the primary rRNA binding proteins. Required for association of the 30S and 50S subunits to form the 70S ribosome, for tRNA binding and peptide bond formation. It has been suggested to have peptidyltransferase activity; this is somewhat controversial. Makes several contacts with the 16S rRNA in the 70S ribosome. The protein is Large ribosomal subunit protein uL2 of Paenarthrobacter aurescens (strain TC1).